Reading from the N-terminus, the 635-residue chain is Extracellular metalloproteinase 1 (635 aa).

An N-terminal signal peptide occupies residues 1–19; it reads MHGLLLAAGLLSLPLHVLA. Residues 20-246 constitute a propeptide that is removed on maturation; the sequence is HPQPSTSTSL…VHNVVDYVAH (227 aa). A glycan (N-linked (GlcNAc...) asparagine) is linked at Asn-287. His-430 lines the Zn(2+) pocket. Residue Glu-431 is part of the active site. His-434 contacts Zn(2+). Asn-475, Asn-594, and Asn-623 each carry an N-linked (GlcNAc...) asparagine glycan.

The protein belongs to the peptidase M36 family. The cofactor is Zn(2+).

It localises to the secreted. Functionally, secreted metalloproteinase probably acting as a virulence factor. This Trichophyton rubrum (Athlete's foot fungus) protein is Extracellular metalloproteinase 1 (MEP1).